The sequence spans 198 residues: Iron-sulfur flavoprotein MJ0731 (198 aa).

Residues Cys-46, Cys-49, Cys-52, and Cys-59 each contribute to the [4Fe-4S] cluster site.

The protein belongs to the SsuE family. Isf subfamily. Homodimer. The cofactor is FMN. It depends on [4Fe-4S] cluster as a cofactor.

Functionally, redox-active protein probably involved in electron transport. The chain is Iron-sulfur flavoprotein MJ0731 from Methanocaldococcus jannaschii (strain ATCC 43067 / DSM 2661 / JAL-1 / JCM 10045 / NBRC 100440) (Methanococcus jannaschii).